The chain runs to 282 residues: Large ribosomal subunit protein uL2 (282 aa).

A disordered region spans residues 230-282 (AMNPIDHPLGGGEGRSSGGRHPVSPWGMPAKGYKTRDKKKASSRLIVKRRGQK). Basic residues predominate over residues 265 to 282 (RDKKKASSRLIVKRRGQK).

It belongs to the universal ribosomal protein uL2 family. In terms of assembly, part of the 50S ribosomal subunit. Forms a bridge to the 30S subunit in the 70S ribosome.

Its function is as follows. One of the primary rRNA binding proteins. Required for association of the 30S and 50S subunits to form the 70S ribosome, for tRNA binding and peptide bond formation. It has been suggested to have peptidyltransferase activity; this is somewhat controversial. Makes several contacts with the 16S rRNA in the 70S ribosome. This Desulfovibrio desulfuricans (strain ATCC 27774 / DSM 6949 / MB) protein is Large ribosomal subunit protein uL2.